A 216-amino-acid polypeptide reads, in one-letter code: MOB kinase activator-like 1 homolog C (216 aa).

Residues Cys-78, Cys-83, His-160, and His-165 each coordinate Zn(2+).

Belongs to the MOB1/phocein family.

In Dictyostelium discoideum (Social amoeba), this protein is MOB kinase activator-like 1 homolog C (mobC).